A 352-amino-acid chain; its full sequence is MDYQTSTPLYDIDYGMSEPCQKLNVRQIAARLLPPLYSLVFIFGFVGNMLVVLILINCKKLKSMTDIYLLNLAISDLLFIITIPFWAHYAADQWVFGNTMCQLFTGFYFIGYFGGIFFIILLTIDRYLAIVHAVFALKARTVTFGAATSVVTWVVAVFASLPGIIFTKSQKEGSRHTCSPHFPSSQYHFWKNFQTLKIVILGLVLPLLVMIVCYSGIIKTLLRCRNEKKKHKAVRLIFVIMIVYFLFWAPYNIVLLLSTFQEFFGLNNCSGSNRLDQAMQVTETLGMTHCCINPIIYAFVGEKFRNYLLRFFRKYFASRFCKGCPVFQGEAPERVSSVYTRSTGEQEISVGL.

Over M1 to A30 the chain is Extracellular. Residue Y3 is modified to Sulfotyrosine. O-linked (GalNAc...) serine glycosylation is present at S6. Y10 and Y14 each carry sulfotyrosine. 2 disulfides stabilise this stretch: C20-C269 and C101-C178. The helical transmembrane segment at R31 to C58 threads the bilayer. Topologically, residues K59–Y68 are cytoplasmic. A helical transmembrane segment spans residues L69–Y89. The Extracellular portion of the chain corresponds to A90–Q102. A helical transmembrane segment spans residues L103–I124. Residues D125 to T141 lie on the Cytoplasmic side of the membrane. The chain crosses the membrane as a helical span at residues V142 to F166. The Extracellular portion of the chain corresponds to T167–I198. A helical transmembrane segment spans residues V199–I218. Topologically, residues K219–R235 are cytoplasmic. The helical transmembrane segment at L236–F260 threads the bilayer. The Extracellular portion of the chain corresponds to Q261–Q277. The helical transmembrane segment at A278–G301 threads the bilayer. The Cytoplasmic portion of the chain corresponds to E302 to L352. S-palmitoyl cysteine attachment occurs at residues C321 and C324. A phosphoserine; by BARK1 mark is found at S336, S337, S342, and S349.

Belongs to the G-protein coupled receptor 1 family. In terms of assembly, interacts with PRAF2. Efficient ligand binding to CCL3/MIP-1alpha and CCL4/MIP-1beta requires sulfation, O-glycosylation and sialic acid modifications. Glycosylation on Ser-6 is required for efficient binding of CCL4. Interacts with GRK2. Interacts with ARRB1 and ARRB2. Interacts with CNIH4. Interacts with S100A4; this interaction stimulates T-lymphocyte chemotaxis. Sulfated on at least 2 of the N-terminal tyrosines. Sulfation is required for efficient binding of the chemokines, CCL3 and CCL4. Post-translationally, O-glycosylated, but not N-glycosylated. Ser-6 appears to be the major site. Also sialylated glycans present which contribute to chemokine binding. Ser-17 may also be glycosylated and, if so, with small moieties such as a T-antigen. In terms of processing, palmitoylation in the C-terminal is important for cell surface expression. Phosphorylation on serine residues in the C-terminal is stimulated by binding CC chemokines especially by APO-RANTES.

It localises to the cell membrane. Its function is as follows. Receptor for a number of inflammatory CC-chemokines including CCL3/MIP-1-alpha, CCL4/MIP-1-beta and RANTES and subsequently transduces a signal by increasing the intracellular calcium ion level. May play a role in the control of granulocytic lineage proliferation or differentiation. Participates in T-lymphocyte migration to the infection site by acting as a chemotactic receptor. This chain is C-C chemokine receptor type 5 (CCR5), found in Bos taurus (Bovine).